A 450-amino-acid polypeptide reads, in one-letter code: 23S rRNA (uracil(1939)-C(5))-methyltransferase RlmD (450 aa).

Residues 15–73 form the TRAM domain; the sequence is KAVPAKNLTVTVASLDPFGQGVARHEGKTVFVTGVLPGEQAEVQLTEEKRQFSHAKLKR. Positions 86, 92, 95, and 173 each coordinate [4Fe-4S] cluster. Residues glutamine 276, phenylalanine 305, asparagine 310, glutamate 326, asparagine 353, and aspartate 374 each contribute to the S-adenosyl-L-methionine site. Catalysis depends on cysteine 400, which acts as the Nucleophile.

The protein belongs to the class I-like SAM-binding methyltransferase superfamily. RNA M5U methyltransferase family. RlmD subfamily.

It catalyses the reaction uridine(1939) in 23S rRNA + S-adenosyl-L-methionine = 5-methyluridine(1939) in 23S rRNA + S-adenosyl-L-homocysteine + H(+). Functionally, catalyzes the formation of 5-methyl-uridine at position 1939 (m5U1939) in 23S rRNA. The sequence is that of 23S rRNA (uracil(1939)-C(5))-methyltransferase RlmD from Pectobacterium atrosepticum (strain SCRI 1043 / ATCC BAA-672) (Erwinia carotovora subsp. atroseptica).